Consider the following 642-residue polypeptide: Influenza virus NS1A-binding protein homolog (642 aa).

The BTB domain occupies 32–99 (CDVRLQVCGH…AYTAQLKADK (68 aa)). The BACK domain maps to 134–233 (CISYRNFASC…YYSADHKLLD (100 aa)). Phosphoserine is present on residues serine 246, serine 277, serine 322, serine 336, and serine 338. Residues 257-281 (KPPRENGHKQISGSSTGCLSSPNAS) form a disordered region. Residues 265–281 (KQISGSSTGCLSSPNAS) are compositionally biased toward polar residues. 6 Kelch repeats span residues 369–415 (KLIA…VLMG), 416–463 (QLYV…ALNG), 465–512 (LYIV…ELGG), 513–559 (YLYI…VLDG), 561–606 (LFVG…TVGN), and 608–642 (IYAV…IFQF).

Belongs to the BTB-kelch protein family. Homodimer; through the BTB domain. Interacts with AHR/Aryl hydrocarbon receptor. Interacts (via BACK domain) with pre-mRNA-binding protein HNRNPK; the interaction is direct. Interacts (via BACK domain) with splicing factor PTBP1; the interaction is direct. Interacts (via Kelch repeats) with RNA polymerase POLR2A (via C-terminal domain). Interacts (via BACK domain) with splicing factor SNRPA; the interaction is indirect. Interacts (via Kelch repeats) with splicing factor SART1. Interacts (via BACK domain) with ALYREF; the interaction is indirect and likely plays a role in mRNA nuclear export. Interacts (via Kelch repeats) with KLHL20 (via Kelch repeats); this interaction blocks the assembly of Cul3-KLHL20 complex. In terms of tissue distribution, ubiquitous expression. In the heart, the highest expression is detected in the ventricles and the lowest in the atria. Expressed in dendrites and spines in neurons.

It localises to the cytoplasm. Its subcellular location is the cytoskeleton. It is found in the nucleus. In terms of biological role, involved in many cell functions, including pre-mRNA splicing, the aryl hydrocarbon receptor (AHR) pathway, F-actin organization and protein ubiquitination. Plays a role in the dynamic organization of the actin skeleton as a stabilizer of actin filaments by association with F-actin through Kelch repeats. Protects cells from cell death induced by actin destabilization. Functions as a modifier of the AHR/Aryl hydrocarbon receptor pathway increasing the concentration of AHR available to activate transcription. In addition, functions as a negative regulator of BCR(KLHL20) E3 ubiquitin ligase complex to prevent ubiquitin-mediated proteolysis of PML and DAPK1, two tumor suppressors. Inhibits pre-mRNA splicing (in vitro). May play a role in mRNA nuclear export. Its function is as follows. May play a role in cell cycle progression in the nucleus. The protein is Influenza virus NS1A-binding protein homolog of Mus musculus (Mouse).